A 322-amino-acid chain; its full sequence is TATA box-binding protein-associated factor RNA polymerase I subunit D (322 aa).

Disordered stretches follow at residues 1-70 (MAQS…SIEP) and 82-116 (FKKKKRKKRKKRKYEPKLRPRGRPRGKPSGTRITR). Ser-23 carries the post-translational modification Phosphoserine. The span at 82-107 (FKKKKRKKRKKRKYEPKLRPRGRPRG) shows a compositional bias: basic residues. Phosphoserine is present on Ser-137. A disordered region spans residues 198–219 (YMDDDGSLSPIEEPLTEDEATN). The residue at position 232 (Ser-232) is a Phosphoserine. Positions 257–267 (FSKKAKDATHR) are enriched in basic and acidic residues. Positions 257-276 (FSKKAKDATHREKGHRRTLK) are disordered.

In terms of assembly, component of the transcription factor SL1/TIF-IB complex, composed of TBP and at least TAF1A, TAF1B, TAF1C and TAF1D. Interacts with UBTF.

It localises to the nucleus. Functionally, component of the transcription factor SL1/TIF-IB complex, which is involved in the assembly of the PIC (preinitiation complex) during RNA polymerase I-dependent transcription. The rate of PIC formation probably is primarily dependent on the rate of association of SL1/TIF-IB with the rDNA promoter. SL1/TIF-IB is involved in stabilization of nucleolar transcription factor 1/UBTF on rDNA. Formation of SL1/TIF-IB excludes the association of TBP with TFIID subunits. The protein is TATA box-binding protein-associated factor RNA polymerase I subunit D (Taf1d) of Mus musculus (Mouse).